Here is a 387-residue protein sequence, read N- to C-terminus: Protein arginine N-methyltransferase 1 (387 aa).

Residues 1-60 (MDQRKGSGSDANGGLAEATASRLRFEDPDEVMEENPAAAAATVGAEEEGGEGGGGEEVIG) form a disordered region. Low complexity predominate over residues 34–44 (ENPAAAAATVG). The 322-residue stretch at 66 to 387 (ADYYFDSYSH…VSRTQHYKMR (322 aa)) folds into the SAM-dependent MTase PRMT-type domain. Residues His-79, Arg-88, Gly-112, Glu-134, and Glu-163 each coordinate S-adenosyl-L-methionine. Active-site residues include Glu-178 and Glu-187.

It belongs to the class I-like SAM-binding methyltransferase superfamily. Protein arginine N-methyltransferase family.

Its subcellular location is the nucleus. It carries out the reaction L-arginyl-[protein] + S-adenosyl-L-methionine = N(omega)-methyl-L-arginyl-[protein] + S-adenosyl-L-homocysteine + H(+). It catalyses the reaction L-arginyl-[protein] + 2 S-adenosyl-L-methionine = N(omega),N(omega)-dimethyl-L-arginyl-[protein] + 2 S-adenosyl-L-homocysteine + 2 H(+). Its function is as follows. Arginine methyltransferase that methylates (mono and asymmetric dimethylation) the guanidino nitrogens of arginyl residues present in target proteins. In Oryza sativa subsp. indica (Rice), this protein is Protein arginine N-methyltransferase 1 (PRMT1).